The sequence spans 157 residues: Vesicle transport protein SFT2B (157 aa).

Residue Met1 is modified to N-acetylmethionine. The Cytoplasmic segment spans residues 1–36 (MDKLKKVLSGQDTEDRSGLSEVVESSSLSWSTRIKG). Ser9 is subject to Phosphoserine. The helical transmembrane segment at 37 to 57 (FIVCFALGILCSLLGTLLLWV) threads the bilayer. Over 58–61 (SRKG) the chain is Lumenal. The helical transmembrane segment at 62-82 (LFAVFYTLGNITSIGSTMFLM) threads the bilayer. At 83-96 (GPLKQLKRMFEPTR) the chain is on the cytoplasmic side. A helical membrane pass occupies residues 97–117 (LIATILVLLFFVLTLCSAFLW). Residues 118-120 (NKG) are Lumenal-facing. The chain crosses the membrane as a helical span at residues 121-141 (LALIFCILQSLALTWYSLSYI). The Cytoplasmic portion of the chain corresponds to 142-157 (PYARDAVKKCFAVCLT).

Belongs to the SFT2 family.

The protein localises to the membrane. Its function is as follows. May be involved in fusion of retrograde transport vesicles derived from an endocytic compartment with the Golgi complex. The sequence is that of Vesicle transport protein SFT2B from Rattus norvegicus (Rat).